The chain runs to 366 residues: Chorismate synthase (366 aa).

2 residues coordinate NADP(+): R48 and R54. FMN contacts are provided by residues 125-127 (RSS), 238-239 (NA), G278, 293-297 (KPTSS), and R319.

This sequence belongs to the chorismate synthase family. In terms of assembly, homotetramer. The cofactor is FMNH2.

It carries out the reaction 5-O-(1-carboxyvinyl)-3-phosphoshikimate = chorismate + phosphate. It participates in metabolic intermediate biosynthesis; chorismate biosynthesis; chorismate from D-erythrose 4-phosphate and phosphoenolpyruvate: step 7/7. Its function is as follows. Catalyzes the anti-1,4-elimination of the C-3 phosphate and the C-6 proR hydrogen from 5-enolpyruvylshikimate-3-phosphate (EPSP) to yield chorismate, which is the branch point compound that serves as the starting substrate for the three terminal pathways of aromatic amino acid biosynthesis. This reaction introduces a second double bond into the aromatic ring system. The polypeptide is Chorismate synthase (Laribacter hongkongensis (strain HLHK9)).